A 122-amino-acid chain; its full sequence is Small ribosomal subunit protein uS12cz/uS12cy (122 aa).

This sequence belongs to the universal ribosomal protein uS12 family. As to quaternary structure, part of the 30S ribosomal subunit.

The protein localises to the plastid. It localises to the chloroplast. With S4 and S5 plays an important role in translational accuracy. Located at the interface of the 30S and 50S subunits. This is Small ribosomal subunit protein uS12cz/uS12cy (rps12-A) from Triticum aestivum (Wheat).